Consider the following 308-residue polypeptide: D-alanine--D-alanine ligase (308 aa).

An ATP-grasp domain is found at 102–302 (KHVAKAAGIP…FGEFLRWMVE (201 aa)). ATP is bound at residue 128 to 183 (PMKPPYVVKPVREGSSFGVVIVKEDQSHPPQVITSSDWRYGDRIMVERYVAGREFT). Residues Asp-252, Glu-269, and Asn-271 each coordinate Mg(2+).

The protein belongs to the D-alanine--D-alanine ligase family. It depends on Mg(2+) as a cofactor. Mn(2+) is required as a cofactor.

The protein localises to the cytoplasm. It catalyses the reaction 2 D-alanine + ATP = D-alanyl-D-alanine + ADP + phosphate + H(+). Its pathway is cell wall biogenesis; peptidoglycan biosynthesis. Cell wall formation. This Sinorhizobium medicae (strain WSM419) (Ensifer medicae) protein is D-alanine--D-alanine ligase.